A 29-amino-acid polypeptide reads, in one-letter code: Glucagon (29 aa).

Belongs to the glucagon family.

It localises to the secreted. Glucagon plays a key role in glucose metabolism and homeostasis. Regulates blood glucose by increasing gluconeogenesis and decreasing glycolysis. This Callorhinchus milii (Ghost shark) protein is Glucagon (gcg).